We begin with the raw amino-acid sequence, 331 residues long: Adenosine deaminase (331 aa).

The Zn(2+) site is built by H12 and H14. Positions 14 and 16 each coordinate substrate. Residue H197 participates in Zn(2+) binding. Catalysis depends on E200, which acts as the Proton donor. Residue D278 coordinates Zn(2+).

This sequence belongs to the metallo-dependent hydrolases superfamily. Adenosine and AMP deaminases family. Adenosine deaminase subfamily. It depends on Zn(2+) as a cofactor.

It carries out the reaction adenosine + H2O + H(+) = inosine + NH4(+). The catalysed reaction is 2'-deoxyadenosine + H2O + H(+) = 2'-deoxyinosine + NH4(+). Catalyzes the hydrolytic deamination of adenosine and 2-deoxyadenosine. The chain is Adenosine deaminase from Shewanella halifaxensis (strain HAW-EB4).